The following is a 402-amino-acid chain: RNA-binding protein 42 (402 aa).

The segment at 240–275 is disordered; the sequence is ETASDDSVIGPSMPEPEPVHVEPVDTSTEDKKKGKQ. Over residues 256–275 the composition is skewed to basic and acidic residues; it reads EPVHVEPVDTSTEDKKKGKQ. The region spanning 303 to 381 is the RRM domain; sequence FRIFCGDLGN…RPIKLRKSAW (79 aa).

It belongs to the RRM RBM42 family.

The protein localises to the nucleus. Its subcellular location is the cytoplasm. In terms of biological role, may bind RNA. The protein is RNA-binding protein 42 (rbm42) of Danio rerio (Zebrafish).